The primary structure comprises 1439 residues: DNA-directed RNA polymerase subunit beta' (1439 aa).

4 residues coordinate Zn(2+): cysteine 70, cysteine 72, cysteine 85, and cysteine 88. Mg(2+)-binding residues include aspartate 504, aspartate 506, and aspartate 508. Cysteine 862, cysteine 936, cysteine 943, and cysteine 946 together coordinate Zn(2+).

This sequence belongs to the RNA polymerase beta' chain family. In terms of assembly, the RNAP catalytic core consists of 2 alpha, 1 beta, 1 beta' and 1 omega subunit. When a sigma factor is associated with the core the holoenzyme is formed, which can initiate transcription. The cofactor is Mg(2+). Zn(2+) is required as a cofactor.

It carries out the reaction RNA(n) + a ribonucleoside 5'-triphosphate = RNA(n+1) + diphosphate. DNA-dependent RNA polymerase catalyzes the transcription of DNA into RNA using the four ribonucleoside triphosphates as substrates. The protein is DNA-directed RNA polymerase subunit beta' of Gluconobacter oxydans (strain 621H) (Gluconobacter suboxydans).